The chain runs to 160 residues: 6,7-dimethyl-8-ribityllumazine synthase (160 aa).

5-amino-6-(D-ribitylamino)uracil contacts are provided by residues F32, 66 to 68 (ALE), and 90 to 92 (CII). 95 to 96 (ET) contacts (2S)-2-hydroxy-3-oxobutyl phosphate. The Proton donor role is filled by H98. N123 is a binding site for 5-amino-6-(D-ribitylamino)uracil. R137 serves as a coordination point for (2S)-2-hydroxy-3-oxobutyl phosphate.

This sequence belongs to the DMRL synthase family.

It catalyses the reaction (2S)-2-hydroxy-3-oxobutyl phosphate + 5-amino-6-(D-ribitylamino)uracil = 6,7-dimethyl-8-(1-D-ribityl)lumazine + phosphate + 2 H2O + H(+). Its pathway is cofactor biosynthesis; riboflavin biosynthesis; riboflavin from 2-hydroxy-3-oxobutyl phosphate and 5-amino-6-(D-ribitylamino)uracil: step 1/2. Catalyzes the formation of 6,7-dimethyl-8-ribityllumazine by condensation of 5-amino-6-(D-ribitylamino)uracil with 3,4-dihydroxy-2-butanone 4-phosphate. This is the penultimate step in the biosynthesis of riboflavin. In Methylibium petroleiphilum (strain ATCC BAA-1232 / LMG 22953 / PM1), this protein is 6,7-dimethyl-8-ribityllumazine synthase.